Consider the following 122-residue polypeptide: UPF0102 protein Cgl2031/cg2228 (122 aa).

It belongs to the UPF0102 family.

In Corynebacterium glutamicum (strain ATCC 13032 / DSM 20300 / JCM 1318 / BCRC 11384 / CCUG 27702 / LMG 3730 / NBRC 12168 / NCIMB 10025 / NRRL B-2784 / 534), this protein is UPF0102 protein Cgl2031/cg2228.